We begin with the raw amino-acid sequence, 174 residues long: FMN reductase (NADH) RutF (174 aa).

Belongs to the non-flavoprotein flavin reductase family. RutF subfamily.

The catalysed reaction is FMNH2 + NAD(+) = FMN + NADH + 2 H(+). In terms of biological role, catalyzes the reduction of FMN to FMNH2 which is used to reduce pyrimidine by RutA via the Rut pathway. The sequence is that of FMN reductase (NADH) RutF from Agrobacterium fabrum (strain C58 / ATCC 33970) (Agrobacterium tumefaciens (strain C58)).